The chain runs to 118 residues: Large ribosomal subunit protein bL19 (118 aa).

The protein belongs to the bacterial ribosomal protein bL19 family.

In terms of biological role, this protein is located at the 30S-50S ribosomal subunit interface and may play a role in the structure and function of the aminoacyl-tRNA binding site. This is Large ribosomal subunit protein bL19 from Wolinella succinogenes (strain ATCC 29543 / DSM 1740 / CCUG 13145 / JCM 31913 / LMG 7466 / NCTC 11488 / FDC 602W) (Vibrio succinogenes).